Here is a 279-residue protein sequence, read N- to C-terminus: Phosphatidylglycerol--prolipoprotein diacylglyceryl transferase (279 aa).

A run of 3 helical transmembrane segments spans residues 18 to 38, 55 to 75, and 89 to 109; these read LSVRWYGIIIAVGILLGYFVA, IIFYSALFGFIAARIYFVIFQ, and IWHGGIAIHGGLIGGFIAGVI. R137 lines the a 1,2-diacyl-sn-glycero-3-phospho-(1'-sn-glycerol) pocket. Transmembrane regions (helical) follow at residues 203 to 223 and 235 to 255; these read LGETFFLYLTWYSIGRFFIEG and IRVAQLVSILLILISISLIVY.

It belongs to the Lgt family.

The protein resides in the cell membrane. It catalyses the reaction L-cysteinyl-[prolipoprotein] + a 1,2-diacyl-sn-glycero-3-phospho-(1'-sn-glycerol) = an S-1,2-diacyl-sn-glyceryl-L-cysteinyl-[prolipoprotein] + sn-glycerol 1-phosphate + H(+). Its pathway is protein modification; lipoprotein biosynthesis (diacylglyceryl transfer). Functionally, catalyzes the transfer of the diacylglyceryl group from phosphatidylglycerol to the sulfhydryl group of the N-terminal cysteine of a prolipoprotein, the first step in the formation of mature lipoproteins. This chain is Phosphatidylglycerol--prolipoprotein diacylglyceryl transferase, found in Staphylococcus aureus (strain bovine RF122 / ET3-1).